The chain runs to 302 residues: Acetaldehyde dehydrogenase (302 aa).

The Acyl-thioester intermediate role is filled by Cys-131. Residues 162-170 (SAGPGTRKN) and Asn-273 each bind NAD(+).

Belongs to the acetaldehyde dehydrogenase family.

It carries out the reaction acetaldehyde + NAD(+) + CoA = acetyl-CoA + NADH + H(+). The protein is Acetaldehyde dehydrogenase of Acidovorax sp. (strain JS42).